The sequence spans 405 residues: Probable succinyl-diaminopimelate desuccinylase (405 aa).

A Zn(2+)-binding site is contributed by H72. D74 is a catalytic residue. D105 lines the Zn(2+) pocket. E139 functions as the Proton acceptor in the catalytic mechanism. E140, E165, and H377 together coordinate Zn(2+).

The protein belongs to the peptidase M20A family. Requires Zn(2+) as cofactor. Co(2+) serves as cofactor.

It catalyses the reaction N-succinyl-(2S,6S)-2,6-diaminopimelate + H2O = (2S,6S)-2,6-diaminopimelate + succinate. It functions in the pathway amino-acid biosynthesis; L-lysine biosynthesis via DAP pathway; LL-2,6-diaminopimelate from (S)-tetrahydrodipicolinate (succinylase route): step 3/3. This chain is Probable succinyl-diaminopimelate desuccinylase (dapE), found in Staphylococcus epidermidis (strain ATCC 35984 / DSM 28319 / BCRC 17069 / CCUG 31568 / BM 3577 / RP62A).